The following is a 43-amino-acid chain: Protein PsbN (43 aa).

A helical membrane pass occupies residues 5–25; it reads TLISVFVASLVIGITAYAIFV.

It belongs to the PsbN family.

The protein localises to the plastid. The protein resides in the chloroplast thylakoid membrane. Functionally, may play a role in photosystem I and II biogenesis. The polypeptide is Protein PsbN (Cyanidioschyzon merolae (strain NIES-3377 / 10D) (Unicellular red alga)).